The chain runs to 171 residues: Putative phosphoesterase BPUM_1117 (171 aa).

H34 serves as the catalytic Proton donor. 2 short sequence motifs (HXTX) span residues 34–37 (HLTL) and 115–118 (HVTV). H115 acts as the Proton acceptor in catalysis.

It belongs to the 2H phosphoesterase superfamily. YjcG family.

The chain is Putative phosphoesterase BPUM_1117 from Bacillus pumilus (strain SAFR-032).